Consider the following 338-residue polypeptide: Fe(3+)-binding periplasmic protein (338 aa).

Positions 1 to 26 (MKLRISSLGPVALLASSMMLAFGAQA) are cleaved as a signal peptide. Residues His-40, Glu-88, Tyr-224, and Tyr-225 each coordinate Fe cation.

The protein belongs to the bacterial solute-binding protein 1 family. As to quaternary structure, the complex is composed of two ATP-binding proteins (FbpC), two transmembrane proteins (FbpB) and a solute-binding protein (FbpA).

It is found in the periplasm. Functionally, part of the ABC transporter complex FbpABC (TC 3.A.1.10.1) involved in Fe(3+) ions import. This protein specifically binds Fe(3+) and is involved in its transmembrane transport. This Serratia marcescens protein is Fe(3+)-binding periplasmic protein (fbpA).